A 103-amino-acid chain; its full sequence is Large ribosomal subunit protein bL21 (103 aa).

The protein belongs to the bacterial ribosomal protein bL21 family. In terms of assembly, part of the 50S ribosomal subunit. Contacts protein L20.

Its function is as follows. This protein binds to 23S rRNA in the presence of protein L20. The protein is Large ribosomal subunit protein bL21 of Shewanella pealeana (strain ATCC 700345 / ANG-SQ1).